The following is a 437-amino-acid chain: Adenylosuccinate synthetase (437 aa).

GTP is bound by residues 12–18 (GDEGKGK) and 40–42 (GHT). Asp-13 (proton acceptor) is an active-site residue. Mg(2+) is bound by residues Asp-13 and Gly-40. IMP contacts are provided by residues 13–16 (DEGK), 38–41 (NAGH), Thr-128, Arg-142, Gln-223, Thr-238, and Arg-302. His-41 acts as the Proton donor in catalysis. A substrate-binding site is contributed by 298–304 (TTTGRRR). Residues Arg-304, 330–332 (KLD), and 412–414 (SLG) contribute to the GTP site.

Belongs to the adenylosuccinate synthetase family. In terms of assembly, homodimer. Mg(2+) serves as cofactor.

The protein resides in the cytoplasm. The catalysed reaction is IMP + L-aspartate + GTP = N(6)-(1,2-dicarboxyethyl)-AMP + GDP + phosphate + 2 H(+). The protein operates within purine metabolism; AMP biosynthesis via de novo pathway; AMP from IMP: step 1/2. Functionally, plays an important role in the de novo pathway of purine nucleotide biosynthesis. Catalyzes the first committed step in the biosynthesis of AMP from IMP. In Synechococcus sp. (strain CC9311), this protein is Adenylosuccinate synthetase.